A 180-amino-acid chain; its full sequence is Large ribosomal subunit protein uL5 (180 aa).

This sequence belongs to the universal ribosomal protein uL5 family. Part of the 50S ribosomal subunit; part of the 5S rRNA/L5/L18/L25 subcomplex. Contacts the 5S rRNA and the P site tRNA. Forms a bridge to the 30S subunit in the 70S ribosome.

Its function is as follows. This is one of the proteins that bind and probably mediate the attachment of the 5S RNA into the large ribosomal subunit, where it forms part of the central protuberance. In the 70S ribosome it contacts protein S13 of the 30S subunit (bridge B1b), connecting the 2 subunits; this bridge is implicated in subunit movement. Contacts the P site tRNA; the 5S rRNA and some of its associated proteins might help stabilize positioning of ribosome-bound tRNAs. The chain is Large ribosomal subunit protein uL5 from Anaeromyxobacter sp. (strain Fw109-5).